The primary structure comprises 312 residues: Ribosomal protein L11 methyltransferase (312 aa).

The S-adenosyl-L-methionine site is built by T162, G183, D205, and N248.

This sequence belongs to the methyltransferase superfamily. PrmA family.

It localises to the cytoplasm. The catalysed reaction is L-lysyl-[protein] + 3 S-adenosyl-L-methionine = N(6),N(6),N(6)-trimethyl-L-lysyl-[protein] + 3 S-adenosyl-L-homocysteine + 3 H(+). Its function is as follows. Methylates ribosomal protein L11. The chain is Ribosomal protein L11 methyltransferase from Bacillus anthracis (strain A0248).